Consider the following 122-residue polypeptide: Interferon alpha-inducible protein 27, mitochondrial (122 aa).

The transit peptide at 1–33 (MEASALTSSAVTSVAKVVRVASGSAVVLPLARI) directs the protein to the mitochondrion. Residues 34 to 57 (ATVVIGGVVAMAAVPMVLSAMGFT) traverse the membrane as a helical segment. Residue lysine 69 forms a Glycyl lysine isopeptide (Lys-Gly) (interchain with G-Cter in ubiquitin) linkage. Transmembrane regions (helical) follow at residues 71–91 (MSAA…VATL) and 99–119 (LSGL…AVIA). A mediates interaction with SKP2 and hepatitis C virus non-structural protein NS5A region spans residues 76–122 (IANGGGVASGSLVATLQSLGATGLSGLTKFILGSIGSAIAAVIARFY). A required for hepatitis C virus non-structural protein NS5A degradation region spans residues 103–112 (TKFILGSIGS).

The protein belongs to the IFI6/IFI27 family. In terms of assembly, homodimer. Interacts with hepatitis C virus/HCV non-structural protein NS5A; promotes the ubiquitin-mediated proteasomal degradation of NS5A. Interacts with SKP2; promotes the ubiquitin-mediated proteasomal degradation of NS5A. Interacts with NR4A1. May interact with BCL2. Post-translationally, ubiquitinated by TRIM21 via 'Lys-6'-linked ubiquitin chains leading to IFI27 mitochondrial migration.

Its subcellular location is the mitochondrion membrane. It is found in the nucleus inner membrane. It localises to the endoplasmic reticulum membrane. Functionally, probable adapter protein involved in different biological processes. Part of the signaling pathways that lead to apoptosis. Involved in type-I interferon-induced apoptosis characterized by a rapid and robust release of cytochrome C from the mitochondria and activation of BAX and caspases 2, 3, 6, 8 and 9. Also functions in TNFSF10-induced apoptosis. May also have a function in the nucleus, where it may be involved in the interferon-induced negative regulation of the transcriptional activity of NR4A1, NR4A2 and NR4A3 through the enhancement of XPO1-mediated nuclear export of these nuclear receptors. May thereby play a role in the vascular response to injury. In the innate immune response, has an antiviral activity towards hepatitis C virus/HCV. May prevent the replication of the virus by recruiting both the hepatitis C virus non-structural protein 5A/NS5A and the ubiquitination machinery via SKP2, promoting the ubiquitin-mediated proteasomal degradation of NS5A. Also promotes virus-induced pyroptosis by activating CASP3 in the mitochondria after 'Lys-6'-linked ubiquitination by TRIM21. The sequence is that of Interferon alpha-inducible protein 27, mitochondrial from Homo sapiens (Human).